Reading from the N-terminus, the 813-residue chain is Probable E3 ubiquitin-protein ligase hulA (813 aa).

The region spanning 1 to 109 is the C2 domain; that stretch reads MGSNLPAQPN…QMGGDEMLTR (109 aa). 2 disordered regions span residues 131-235 and 251-351; these read NLST…GWER and RTTT…YFVD. Residues 148 to 167 show a composition bias toward polar residues; the sequence is VQSSTSSGLVPQVAPSSSHP. The segment covering 188–215 has biased composition (low complexity); the sequence is RVPSTTRPSSTAAPASAAGAAVSNSHGS. One can recognise a WW 1 domain in the interval 227–260; it reads GRLPAGWERREDNLGRTYYVDHNTRTTTWTRPSS. A compositionally biased stretch (polar residues) spans 251–264; the sequence is RTTTWTRPSSNYNE. The segment covering 265 to 292 has biased composition (basic and acidic residues); it reads HAQRSQREANMQLERRAHQSRMLPEDRT. Polar residues predominate over residues 293 to 307; that stretch reads GANSPNLPESSQQAH. The segment covering 322–331 has biased composition (low complexity); the sequence is ATGATTAGTG. WW domains follow at residues 331–364 and 391–424; these read GELP…DPRR and GPLP…DPRL. The 334-residue stretch at 480-813 folds into the HECT domain; that stretch reads SASDLKKRLM…VEETLGFGQE (334 aa). The active-site Glycyl thioester intermediate is the C781.

Belongs to the RSP5/NEDD4 family. As to quaternary structure, interacts with creD.

It localises to the cytoplasm. The catalysed reaction is S-ubiquitinyl-[E2 ubiquitin-conjugating enzyme]-L-cysteine + [acceptor protein]-L-lysine = [E2 ubiquitin-conjugating enzyme]-L-cysteine + N(6)-ubiquitinyl-[acceptor protein]-L-lysine.. Its pathway is protein modification; protein ubiquitination. Functionally, E3 ubiquitin-protein ligase which accepts ubiquitin from an E2 ubiquitin-conjugating enzyme in the form of a thioester and then directly transfers the ubiquitin to targeted substrates. Probably involved in the regulatory network controlling carbon source utilization. The polypeptide is Probable E3 ubiquitin-protein ligase hulA (hulA) (Aspergillus fumigatus (strain CBS 144.89 / FGSC A1163 / CEA10) (Neosartorya fumigata)).